The chain runs to 401 residues: Nodal homolog 3-B (401 aa).

A signal peptide spans 1–18 (MALLNLFFCLVFSSPLMA). A propeptide spanning residues 19 to 274 (MPPVLQGRKS…KVNGFRRLRR (256 aa)) is cleaved from the precursor. N-linked (GlcNAc...) asparagine glycosylation is found at N168, N337, N341, and N344. Cystine bridges form between C299–C365 and C328–C396.

It belongs to the TGF-beta family. Monomer. The propeptide region interacts with bmp4 in a non-covalent manner. In terms of tissue distribution, expressed in the dorsal marginal region of late blastula, becoming restricted to the dorsal blastopore lip (Spemann organizer) at the early gastrula stage.

The protein localises to the secreted. Its function is as follows. Exhibits mesoderm-dorsalizing activity and neural-inducing activity, but lacks mesoderm-inducing activity. Regulates the expression of specific mesodermal and neural genes. Induces convergent extension movements at the embryonic midline by activating the fgf signaling pathway to induce t/bra expression in the organizer region. Acts with wnt11 to induce Spemann organizer cells and induce axis formation. The unprocessed protein antagonizes bmp-signaling. This is Nodal homolog 3-B (nodal3-b) from Xenopus laevis (African clawed frog).